Consider the following 270-residue polypeptide: 3-phenylpropionate-dihydrodiol/cinnamic acid-dihydrodiol dehydrogenase (270 aa).

10 to 34 provides a ligand contact to NAD(+); the sequence is FITGGGSGLGLALVERFIEEGAQVA. Residue serine 143 coordinates substrate. Tyrosine 156 functions as the Proton acceptor in the catalytic mechanism.

The protein belongs to the short-chain dehydrogenases/reductases (SDR) family.

The enzyme catalyses 3-(cis-5,6-dihydroxycyclohexa-1,3-dien-1-yl)propanoate + NAD(+) = 3-(2,3-dihydroxyphenyl)propanoate + NADH + H(+). The catalysed reaction is (2E)-3-(cis-5,6-dihydroxycyclohexa-1,3-dien-1-yl)prop-2-enoate + NAD(+) = (2E)-3-(2,3-dihydroxyphenyl)prop-2-enoate + NADH + H(+). Its pathway is aromatic compound metabolism; 3-phenylpropanoate degradation. Functionally, converts 3-phenylpropionate-dihydrodiol (PP-dihydrodiol) and cinnamic acid-dihydrodiol (CI-dihydrodiol) into 3-(2,3-dihydroxylphenyl)propanoic acid (DHPP) and 2,3-dihydroxicinnamic acid (DHCI), respectively. This chain is 3-phenylpropionate-dihydrodiol/cinnamic acid-dihydrodiol dehydrogenase, found in Shigella flexneri serotype 5b (strain 8401).